Reading from the N-terminus, the 178-residue chain is Cytochrome c-type biogenesis protein CcmE (178 aa).

Over 1-8 the chain is Cytoplasmic; it reads MNPRRKKR. The chain crosses the membrane as a helical; Signal-anchor for type II membrane protein span at residues 9–29; that stretch reads LAIVGSILIGIGVVSGLVLYA. Topologically, residues 30–178 are periplasmic; that stretch reads LSQNIDLFFT…QLESKKTNSY (149 aa). Heme is bound by residues H143 and Y147. Residues 154-178 form a disordered region; it reads EAAGQKHDKATYSDKQLESKKTNSY. Over residues 157-178 the composition is skewed to basic and acidic residues; sequence GQKHDKATYSDKQLESKKTNSY.

It belongs to the CcmE/CycJ family.

Its subcellular location is the cell inner membrane. Its function is as follows. Heme chaperone required for the biogenesis of c-type cytochromes. Transiently binds heme delivered by CcmC and transfers the heme to apo-cytochromes in a process facilitated by CcmF and CcmH. The sequence is that of Cytochrome c-type biogenesis protein CcmE from Colwellia psychrerythraea (strain 34H / ATCC BAA-681) (Vibrio psychroerythus).